We begin with the raw amino-acid sequence, 275 residues long: NADPH-dependent 7-cyano-7-deazaguanine reductase (275 aa).

81–83 (IES) provides a ligand contact to substrate. 83-84 (SK) lines the NADPH pocket. The active-site Thioimide intermediate is the Cys-181. Asp-188 (proton donor) is an active-site residue. 220–221 (HE) serves as a coordination point for substrate. Residue 249–250 (RG) coordinates NADPH.

It belongs to the GTP cyclohydrolase I family. QueF type 2 subfamily. Homodimer.

It is found in the cytoplasm. The catalysed reaction is 7-aminomethyl-7-carbaguanine + 2 NADP(+) = 7-cyano-7-deazaguanine + 2 NADPH + 3 H(+). It participates in tRNA modification; tRNA-queuosine biosynthesis. Its function is as follows. Catalyzes the NADPH-dependent reduction of 7-cyano-7-deazaguanine (preQ0) to 7-aminomethyl-7-deazaguanine (preQ1). The polypeptide is NADPH-dependent 7-cyano-7-deazaguanine reductase (Xylella fastidiosa (strain 9a5c)).